We begin with the raw amino-acid sequence, 741 residues long: NAD(P)H-quinone oxidoreductase subunit 5, chloroplastic (741 aa).

A run of 16 helical transmembrane segments spans residues 9–29 (WIIP…LLLF), 40–60 (WAFQ…NLSI), 89–109 (IDPL…MVLI), 125–145 (FAYM…SNLI), 147–167 (IYIF…FWFT), 185–205 (GDFG…SFEF), 219–239 (NEVN…GAIA), 258–278 (TPIS…FLVA), 283–303 (LFIV…ITVF), 327–347 (LGYM…FHLI), 354–374 (ALLF…VGYC), 396–416 (NSFL…CFWS), 425–445 (WLYS…TAFY), 549–569 (LFPI…GIPF), 605–625 (FFSV…YKPV), and 721–741 (YLFF…FFNL).

This sequence belongs to the complex I subunit 5 family. NDH is composed of at least 16 different subunits, 5 of which are encoded in the nucleus.

Its subcellular location is the plastid. The protein resides in the chloroplast thylakoid membrane. The enzyme catalyses a plastoquinone + NADH + (n+1) H(+)(in) = a plastoquinol + NAD(+) + n H(+)(out). It carries out the reaction a plastoquinone + NADPH + (n+1) H(+)(in) = a plastoquinol + NADP(+) + n H(+)(out). Its function is as follows. NDH shuttles electrons from NAD(P)H:plastoquinone, via FMN and iron-sulfur (Fe-S) centers, to quinones in the photosynthetic chain and possibly in a chloroplast respiratory chain. The immediate electron acceptor for the enzyme in this species is believed to be plastoquinone. Couples the redox reaction to proton translocation, and thus conserves the redox energy in a proton gradient. The polypeptide is NAD(P)H-quinone oxidoreductase subunit 5, chloroplastic (ndhF) (Cichorium intybus (Chicory)).